The primary structure comprises 361 residues: Septin-12 (361 aa).

The region spanning 45-316 (MGFEFNIMVV…ENYRIIRLKE (272 aa)) is the Septin-type G domain. Residues 45–318 (MGFEFNIMVV…YRIIRLKESH (274 aa)) are interaction with SEPTIN7. The G1 motif stretch occupies residues 55 to 62 (GQSGLGKS). Residues 55 to 62 (GQSGLGKS), T88, G114, 194 to 202 (RADSLTIEE), G250, and R265 each bind GTP. Positions 111 to 114 (DTPG) are G3 motif. The G4 motif stretch occupies residues 193–196 (ARAD). The tract at residues 257 to 361 (VNGRCVLGRK…WAEDNSDEDF (105 aa)) is self-association (via N-terminus) to polymerize octameric septin 12-7-6-2/4-2/4-6-7-12 filaments. The interval 333–361 (PPPAPTGTRASPGPAKMCRWAEDNSDEDF) is disordered. Over residues 338-347 (TGTRASPGPA) the composition is skewed to low complexity.

It belongs to the TRAFAC class TrmE-Era-EngA-EngB-Septin-like GTPase superfamily. Septin GTPase family. Septins polymerize into heterooligomeric protein complexes that form filaments, and can associate with cellular membranes, actin filaments and microtubules. GTPase activity is required for filament formation. Interacts with SEPTIN6 and SEPTIN11. Component of a octameric complex consisting of SEPTIN12, SEPTIN7, SEPTIN6 and SEPTIN2 or SEPTIN4 in the order 12-7-6-2-2-6-7-12 or 12-7-6-4-4-6-7-12 and located in the sperm annulus; the octamer polymerizes into filaments via the SEPTIN12 N- and C-termini; the SEPTIN12:SEPTIN7 association is mediated by the GTP-binding domains. Interacts with SPAG4 and LMNB1. Associates with alpha- and beta-tubulins.

The protein localises to the cytoplasm. It localises to the cytoskeleton. The protein resides in the spindle. Its subcellular location is the cell projection. It is found in the cilium. The protein localises to the flagellum. Functionally, filament-forming cytoskeletal GTPase. May play a role in cytokinesis (Potential). Involved in spermatogenesis. Involved in the morphogenesis of sperm heads and the elongation of sperm tails probably implicating the association with alpha- and beta-tubulins. Forms a filamentous structure with SEPTIN7, SEPTIN6, SEPTIN2 and probably SEPTIN4 at the sperm annulus which is required for the structural integrity and motility of the sperm tail during postmeiotic differentiation. The polypeptide is Septin-12 (Bos taurus (Bovine)).